A 129-amino-acid chain; its full sequence is Small ribosomal subunit protein uS9 (129 aa).

This sequence belongs to the universal ribosomal protein uS9 family.

The chain is Small ribosomal subunit protein uS9 from Helicobacter hepaticus (strain ATCC 51449 / 3B1).